The primary structure comprises 497 residues: Transmembrane protein 200A (497 aa).

Residues 1–61 (MIATGGVITG…RGKIRLYSAS (61 aa)) are Cytoplasmic-facing. Polar residues predominate over residues 20–30 (TRSQYHLSAQS). Residues 20-44 (TRSQYHLSAQSPGPAPEKKTTKRKP) are disordered. A helical membrane pass occupies residues 62-82 (GFFLVLGVLILMAGIAMAVLG). The Extracellular segment spans residues 83-127 (YWPHKDQPKAPETKMSANNTQSFGREQAGSIAQFLEQHMHSEKMK). An N-linked (GlcNAc...) asparagine glycan is attached at Asn-100. A helical membrane pass occupies residues 128–148 (MLGPFTMGIGIFIFICANAIL). Residues 149–497 (HENRDRETKV…LKRGTSETRF (349 aa)) lie on the Cytoplasmic side of the membrane. Over residues 353 to 375 (SNSATESASSTSSRSSLSPGSTS) the composition is skewed to low complexity. Disordered stretches follow at residues 353–385 (SNSATESASSTSSRSSLSPGSTSGRFLSPGAAR) and 400–438 (HSKSLDLERGPTKLTVQPEQRKHPSWPRLDRSNSKGYTR). Basic and acidic residues predominate over residues 427–438 (RLDRSNSKGYTR).

This sequence belongs to the TMEM200 family.

Its subcellular location is the membrane. The chain is Transmembrane protein 200A (tmem200a) from Danio rerio (Zebrafish).